The chain runs to 234 residues: Putative ankyrin repeat protein RF_0063 (234 aa).

2 ANK repeats span residues 149–180 (NNNTALHYAVDKNLEKLSISLINKMSIETISI) and 184–213 (YNNTALHYATDNGLEVISWFLINNMTQKAL).

The protein is Putative ankyrin repeat protein RF_0063 of Rickettsia felis (strain ATCC VR-1525 / URRWXCal2) (Rickettsia azadi).